A 369-amino-acid chain; its full sequence is MKENNNAEILELKKQFTALQQKCGAKTDTIVRLGQDLEKSENEKKGLAARVETLERNLERSERELQLVCACQNDMKIKFGTERQDLIEDIEKYKRENQQLRTDRQELLDQKADLKKDCKTFRQTIAQFEVEKMGGPVRNSFSTENDEVSKLEAHEKLQAKCKGLESDLRSMLGIKEELLMERDEMQRKVARLSNELSYLLNGDPRRVAEDLDSLVAENRFLKAKLNTAEEESESIKMTLAKYKQMAEAVNVQTMVNRSPKAGEGDDKPSVAVINMKQIRELLASHAIELVESDYRAITTILLDLCNDKQMALAHSRRANKVLGMRLHEVESKLAVLDIKSRSSSPRHELPRDEDIELVVPKAVASTSSK.

Residues 1–249 are a coiled coil; it reads MKENNNAEIL…AKYKQMAEAV (249 aa).

Belongs to the CCDC149 family. Expressed in amphid and phasmid ciliated neurons, and also pharyngeal, touch receptor and motor neurons.

It localises to the cell projection. It is found in the cilium. The protein is Coiled-coil domain-containing protein 149 of Caenorhabditis elegans.